The following is a 593-amino-acid chain: Mitoguardin 2 (593 aa).

2 helical membrane passes run 11–31 (MIQA…TTFG) and 42–62 (PGLR…ALAA). 2 disordered regions span residues 103 to 141 (GYSS…VASM) and 196 to 231 (SVGQ…SQRK). 2 stretches are compositionally biased toward low complexity: residues 106–116 (SRRVQSPSSKS) and 123–141 (ISSI…VASM). Residue Ser132 is modified to Phosphoserine. Thr206 bears the Phosphothreonine mark. 3 positions are modified to phosphoserine: Ser220, Ser224, and Ser228. Thr273 carries the phosphothreonine modification. Ser276 and Ser295 each carry phosphoserine. The FFAT motif lies at 292 to 298 (SFFSATE).

This sequence belongs to the mitoguardin family. As to quaternary structure, homodimer and heterodimer; forms heterodimers with MIGA1. Interacts with PLD6/MitoPLD. Interacts (via phosphorylated FFAT motif) with MOSPD2, VAPA and VAPB. Post-translationally, phosphorylation at Ser-295 of the FFAT motif activates interaction with MOSPD2, VAPA and VAPB.

Its subcellular location is the mitochondrion outer membrane. Functionally, regulator of mitochondrial fusion: acts by forming homo- and heterodimers at the mitochondrial outer membrane and facilitating the formation of PLD6/MitoPLD dimers. May act by regulating phospholipid metabolism via PLD6/MitoPLD. This is Mitoguardin 2 from Homo sapiens (Human).